Here is a 197-residue protein sequence, read N- to C-terminus: Pyridoxal 5'-phosphate synthase subunit PdxT (197 aa).

54–56 is an L-glutamine binding site; the sequence is GES. Cysteine 86 functions as the Nucleophile in the catalytic mechanism. L-glutamine contacts are provided by residues arginine 113 and 141 to 142; that span reads IR. Active-site charge relay system residues include histidine 177 and glutamate 179.

It belongs to the glutaminase PdxT/SNO family. In the presence of PdxS, forms a dodecamer of heterodimers. Only shows activity in the heterodimer.

It carries out the reaction aldehydo-D-ribose 5-phosphate + D-glyceraldehyde 3-phosphate + L-glutamine = pyridoxal 5'-phosphate + L-glutamate + phosphate + 3 H2O + H(+). It catalyses the reaction L-glutamine + H2O = L-glutamate + NH4(+). It functions in the pathway cofactor biosynthesis; pyridoxal 5'-phosphate biosynthesis. In terms of biological role, catalyzes the hydrolysis of glutamine to glutamate and ammonia as part of the biosynthesis of pyridoxal 5'-phosphate. The resulting ammonia molecule is channeled to the active site of PdxS. This chain is Pyridoxal 5'-phosphate synthase subunit PdxT, found in Haloarcula marismortui (strain ATCC 43049 / DSM 3752 / JCM 8966 / VKM B-1809) (Halobacterium marismortui).